Reading from the N-terminus, the 368-residue chain is MAAASEERMAEEGGGGHGDGGSCSAAGSAQRQPPAPPSQAPPPGSQAPAAPALAPDHLPQNNTLVALPIVAIENILSFMSYDEISQLRLVCKRMDLVCQRMLNQGFLKVERFHNLCQKQVKAQLPRRESERRNHSLARHADILAAVETRLSLLNMTFMKYVDSNLCCFIPGKVIDEIYRVLRYVNSTRAPQRAHEVLQELRDISSMAMEYFDEKIVPILKRKLPGSDVSGRLMGSPPVPGPSAALTTMQLFSKQNPSRQEVTKLQQQVRTNGAGVTVLRREISELRTKVQEQQKQLQDQDQKLLEQTQIIGEQNARLAELERKLREVMESAVGTSSGSGQSEESPRKRRKATEAIDSLRKSKRLRNRK.

Residues 1 to 11 are compositionally biased toward basic and acidic residues; it reads MAAASEERMAE. Positions 1–56 are disordered; the sequence is MAAASEERMAEEGGGGHGDGGSCSAAGSAQRQPPAPPSQAPPPGSQAPAAPALAPD. Gly residues predominate over residues 12–21; sequence EGGGGHGDGG. Residues 22-32 are compositionally biased toward low complexity; that stretch reads SCSAAGSAQRQ. A compositionally biased stretch (pro residues) spans 33-45; sequence PPAPPSQAPPPGS. The span at 46–55 shows a compositional bias: low complexity; the sequence is QAPAAPALAP. Residues 61–109 form the F-box domain; it reads NNTLVALPIVAIENILSFMSYDEISQLRLVCKRMDLVCQRMLNQGFLKV. Ser235 and Ser242 each carry phosphoserine. A Phosphothreonine modification is found at Thr270. The tract at residues 328–368 is disordered; that stretch reads MESAVGTSSGSGQSEESPRKRRKATEAIDSLRKSKRLRNRK. A Phosphoserine modification is found at Ser344.

In terms of assembly, part of a SCF (SKP1-cullin-F-box) protein ligase complex.

It is found in the chromosome. The protein localises to the centromere. Its subcellular location is the kinetochore. Functionally, probably recognizes and binds to some phosphorylated proteins and promotes their ubiquitination and degradation. In Mus musculus (Mouse), this protein is F-box only protein 28 (Fbxo28).